A 108-amino-acid chain; its full sequence is Protein YcgL (108 aa).

The YcgL domain occupies 12–96 (MFCVIYRSSK…PPEDLLKQHL (85 aa)).

The sequence is that of Protein YcgL from Escherichia coli O127:H6 (strain E2348/69 / EPEC).